The following is a 268-amino-acid chain: Tryptophan synthase alpha chain (268 aa).

Residues glutamate 49 and aspartate 60 each act as proton acceptor in the active site.

It belongs to the TrpA family. Tetramer of two alpha and two beta chains.

The enzyme catalyses (1S,2R)-1-C-(indol-3-yl)glycerol 3-phosphate + L-serine = D-glyceraldehyde 3-phosphate + L-tryptophan + H2O. Its pathway is amino-acid biosynthesis; L-tryptophan biosynthesis; L-tryptophan from chorismate: step 5/5. Its function is as follows. The alpha subunit is responsible for the aldol cleavage of indoleglycerol phosphate to indole and glyceraldehyde 3-phosphate. This is Tryptophan synthase alpha chain from Escherichia coli (strain ATCC 8739 / DSM 1576 / NBRC 3972 / NCIMB 8545 / WDCM 00012 / Crooks).